A 414-amino-acid polypeptide reads, in one-letter code: Heterogeneous nuclear ribonucleoprotein F (414 aa).

Position 1 is an N-acetylmethionine (Met1). An N-acetylmethionine; in Heterogeneous nuclear ribonucleoprotein F, N-terminally processed modification is found at Met2. Residues 11–90 enclose the RRM 1 domain; that stretch reads FVVKLRGLPW…RYIEVFKSHR (80 aa). Lys72 is covalently cross-linked (Glycyl lysine isopeptide (Lys-Gly) (interchain with G-Cter in SUMO)). The tract at residues 81–86 is interaction with RNA; that stretch reads RYIEVF. Lys87 participates in a covalent cross-link: Glycyl lysine isopeptide (Lys-Gly) (interchain with G-Cter in SUMO2). 2 positions are modified to phosphoserine: Ser104 and Ser161. The region spanning 111 to 188 is the RRM 2 domain; it reads GFVRLRGLPF…RYIEVFKSSQ (78 aa). Lys167 is covalently cross-linked (Glycyl lysine isopeptide (Lys-Gly) (interchain with G-Cter in SUMO2)). Residues 179 to 184 are interaction with RNA; it reads RYIEVF. Lys185 participates in a covalent cross-link: Glycyl lysine isopeptide (Lys-Gly) (interchain with G-Cter in SUMO2). Phosphoserine is present on residues Ser187, Ser193, and Ser195. The residue at position 200 (Lys200) is an N6-acetyllysine; alternate. Residue Lys200 forms a Glycyl lysine isopeptide (Lys-Gly) (interchain with G-Cter in SUMO2); alternate linkage. Position 215 is a phosphothreonine (Thr215). Lys224 carries the post-translational modification N6-acetyllysine; alternate. Lys224 is covalently cross-linked (Glycyl lysine isopeptide (Lys-Gly) (interchain with G-Cter in SUMO2); alternate). Phosphoserine is present on Ser265. Residues 289–366 enclose the RRM 3 domain; sequence HCVHMRGLPY…IELFLNSTTG (78 aa). An interaction with RNA region spans residues 355–360; it reads RYIELF.

In terms of assembly, identified in the spliceosome C complex. Interacts with AGO1, AGO2, TBP and TXNL4/DIM1. Sumoylated.

The protein resides in the nucleus. It localises to the nucleoplasm. Its function is as follows. Component of the heterogeneous nuclear ribonucleoprotein (hnRNP) complexes which provide the substrate for the processing events that pre-mRNAs undergo before becoming functional, translatable mRNAs in the cytoplasm. Plays a role in the regulation of alternative splicing events. Binds G-rich sequences in pre-mRNAs and keeps target RNA in an unfolded state. This is Heterogeneous nuclear ribonucleoprotein F (HNRNPF) from Bos taurus (Bovine).